The following is a 392-amino-acid chain: MTLLGTALRPAATRVMLLGSGELGKEVAIECQRLGIEVIAVDRYPDAPAMHVAHRSHVINMLDGEALRHVIAVEKPHYIVPEIEAIATDTLRDLEDEGLNVVPCARATQLTMNREGIRRLAAEELGLPTSTYRFADSEASFRDAVAAVGFPCIVKPVMSSSGKGQSFIRSPEQLAQAWKYAQQGGRAGAGRVIVEGVVKFDFEITLLTVSAVDGVYFCAPVGHRQQDGDYRESWQPQQMSELALKRAQEIARHVVLALGGHGLFGVELFVCGDEVIFSEVSPRPHDTGMVTLISQDLSEFALHVRAFLGLPVGAIRQYGPAASAVILPQLTSRNVTFDNVQAAVGAGLQVRFFGKPEIDGARRLGVALATGENVEEAVIRAKKAVSSVIVKE.

Residues 22-23 and glutamate 82 each bind N(1)-(5-phospho-beta-D-ribosyl)glycinamide; that span reads EL. Residues arginine 114, lysine 155, 160-165, 195-198, and glutamate 203 each bind ATP; these read SSGKGQ and EGVV. Positions 119 to 308 constitute an ATP-grasp domain; it reads RLAAEELGLP…EFALHVRAFL (190 aa). Mg(2+)-binding residues include glutamate 267 and glutamate 279. N(1)-(5-phospho-beta-D-ribosyl)glycinamide-binding positions include aspartate 286, lysine 355, and 362 to 363; that span reads RR.

Belongs to the PurK/PurT family. As to quaternary structure, homodimer.

It catalyses the reaction N(1)-(5-phospho-beta-D-ribosyl)glycinamide + formate + ATP = N(2)-formyl-N(1)-(5-phospho-beta-D-ribosyl)glycinamide + ADP + phosphate + H(+). Its pathway is purine metabolism; IMP biosynthesis via de novo pathway; N(2)-formyl-N(1)-(5-phospho-D-ribosyl)glycinamide from N(1)-(5-phospho-D-ribosyl)glycinamide (formate route): step 1/1. Functionally, involved in the de novo purine biosynthesis. Catalyzes the transfer of formate to 5-phospho-ribosyl-glycinamide (GAR), producing 5-phospho-ribosyl-N-formylglycinamide (FGAR). Formate is provided by PurU via hydrolysis of 10-formyl-tetrahydrofolate. The sequence is that of Formate-dependent phosphoribosylglycinamide formyltransferase from Salmonella arizonae (strain ATCC BAA-731 / CDC346-86 / RSK2980).